The primary structure comprises 245 residues: tRNA pseudouridine synthase A 2 (245 aa).

The active-site Nucleophile is D53. Y111 lines the substrate pocket.

Belongs to the tRNA pseudouridine synthase TruA family. Homodimer.

It catalyses the reaction uridine(38/39/40) in tRNA = pseudouridine(38/39/40) in tRNA. In terms of biological role, formation of pseudouridine at positions 38, 39 and 40 in the anticodon stem and loop of transfer RNAs. This is tRNA pseudouridine synthase A 2 from Bacillus anthracis.